The sequence spans 754 residues: Cytosolic neutral trehalase (754 aa).

The segment covering 1–10 (MDGKVNNNPP) has biased composition (polar residues). Disordered stretches follow at residues 1-47 (MDGK…LSKN) and 54-73 (TFSV…YTSP). Residues Asp-117, Asp-119, Asn-121, Gln-123, and Asp-128 each contribute to the Ca(2+) site. Residues Arg-305, 312–313 (WD), Asn-349, 358–360 (RSQ), Glu-427, Arg-476, and Gly-479 contribute to the substrate site. Active-site proton donor/acceptor residues include Asp-481 and Glu-676.

Belongs to the glycosyl hydrolase 37 family. The cofactor is Ca(2+).

It is found in the cytoplasm. The enzyme catalyses alpha,alpha-trehalose + H2O = alpha-D-glucose + beta-D-glucose. Its pathway is carbohydrate degradation. In terms of biological role, hydrolyzes intracellular trehalose to glucose. The disaccharide trehalose serves as a storage molecule for energy and carbohydrates that is mobilized during nutrient stress. The polypeptide is Cytosolic neutral trehalase (Kluyveromyces lactis (strain ATCC 8585 / CBS 2359 / DSM 70799 / NBRC 1267 / NRRL Y-1140 / WM37) (Yeast)).